We begin with the raw amino-acid sequence, 167 residues long: Large ribosomal subunit protein uL10 (167 aa).

This sequence belongs to the universal ribosomal protein uL10 family. Part of the ribosomal stalk of the 50S ribosomal subunit. The N-terminus interacts with L11 and the large rRNA to form the base of the stalk. The C-terminus forms an elongated spine to which L12 dimers bind in a sequential fashion forming a multimeric L10(L12)X complex.

Functionally, forms part of the ribosomal stalk, playing a central role in the interaction of the ribosome with GTP-bound translation factors. In Flavobacterium johnsoniae (strain ATCC 17061 / DSM 2064 / JCM 8514 / BCRC 14874 / CCUG 350202 / NBRC 14942 / NCIMB 11054 / UW101) (Cytophaga johnsonae), this protein is Large ribosomal subunit protein uL10.